Consider the following 294-residue polypeptide: Cyclin-G1 (294 aa).

Belongs to the cyclin family. Cyclin G subfamily.

The protein resides in the nucleus. May play a role in growth regulation. Is associated with G2/M phase arrest in response to DNA damage. May be an intermediate by which p53 mediates its role as an inhibitor of cellular proliferation. The protein is Cyclin-G1 (Ccng1) of Rattus norvegicus (Rat).